A 284-amino-acid polypeptide reads, in one-letter code: Pseudouridine-5'-phosphate glycosidase (284 aa).

The active-site Proton donor is the Glu-17. Substrate contacts are provided by Lys-77 and Val-97. Residue Asp-126 coordinates Mn(2+). A substrate-binding site is contributed by 128–130; it reads SQD. The active-site Nucleophile is Lys-147.

It belongs to the pseudouridine-5'-phosphate glycosidase family. In terms of assembly, homotrimer. Mn(2+) serves as cofactor.

It carries out the reaction D-ribose 5-phosphate + uracil = psi-UMP + H2O. In terms of biological role, catalyzes the reversible cleavage of pseudouridine 5'-phosphate (PsiMP) to ribose 5-phosphate and uracil. Functions biologically in the cleavage direction, as part of a pseudouridine degradation pathway. This is Pseudouridine-5'-phosphate glycosidase from Thermotoga neapolitana (strain ATCC 49049 / DSM 4359 / NBRC 107923 / NS-E).